The following is a 292-amino-acid chain: uncharacterized protein (292 aa).

Leucine 17, aspartate 55, asparagine 82, and lysine 115 together coordinate NADP(+). Serine 134 (proton donor) is an active-site residue. Residues tyrosine 148, lysine 152, and threonine 184 each contribute to the NADP(+) site. Residue tyrosine 148 is the Proton acceptor of the active site. Lysine 152 functions as the Lowers pKa of active site Tyr in the catalytic mechanism.

This sequence belongs to the short-chain dehydrogenases/reductases (SDR) family.

Its subcellular location is the cytoplasm. This is an uncharacterized protein from Schizosaccharomyces pombe (strain 972 / ATCC 24843) (Fission yeast).